A 102-amino-acid chain; its full sequence is Small ribosomal subunit protein uS10 (102 aa).

The protein belongs to the universal ribosomal protein uS10 family. Part of the 30S ribosomal subunit.

Involved in the binding of tRNA to the ribosomes. The protein is Small ribosomal subunit protein uS10 of Methylobacterium nodulans (strain LMG 21967 / CNCM I-2342 / ORS 2060).